A 492-amino-acid polypeptide reads, in one-letter code: Glycerol kinase 1 (492 aa).

Thr10 is a binding site for ADP. ATP is bound by residues Thr10 and Ser11. Thr10 contacts sn-glycerol 3-phosphate. Lys14 provides a ligand contact to ADP. Residues Arg80, Glu81, Tyr132, and Asp241 each contribute to the sn-glycerol 3-phosphate site. Arg80, Glu81, Tyr132, and Asp241 together coordinate glycerol. Residues Thr263, Gly306, Gly407, and Asn411 each contribute to the ADP site. 3 residues coordinate ATP: Thr263, Gly306, and Gly407.

Belongs to the FGGY kinase family.

The catalysed reaction is glycerol + ATP = sn-glycerol 3-phosphate + ADP + H(+). It participates in polyol metabolism; glycerol degradation via glycerol kinase pathway; sn-glycerol 3-phosphate from glycerol: step 1/1. Its activity is regulated as follows. Inhibited by fructose 1,6-bisphosphate (FBP). Key enzyme in the regulation of glycerol uptake and metabolism. Catalyzes the phosphorylation of glycerol to yield sn-glycerol 3-phosphate. This chain is Glycerol kinase 1, found in Thermotoga maritima (strain ATCC 43589 / DSM 3109 / JCM 10099 / NBRC 100826 / MSB8).